We begin with the raw amino-acid sequence, 229 residues long: DNA mismatch repair protein MutH (229 aa).

Belongs to the MutH family.

It localises to the cytoplasm. In terms of biological role, sequence-specific endonuclease that cleaves unmethylated GATC sequences. It is involved in DNA mismatch repair. This chain is DNA mismatch repair protein MutH, found in Escherichia coli (strain SMS-3-5 / SECEC).